Here is a 544-residue protein sequence, read N- to C-terminus: Chaperonin GroEL 1 (544 aa).

ATP is bound by residues 29–32, 86–90, Gly-413, 476–478, and Asp-492; these read TLGP, DGTTT, and NAA. The segment at 523 to 544 is disordered; that stretch reads EPVKAPAGGGDMDGMGGMGGMM. The segment covering 529-544 has biased composition (gly residues); that stretch reads AGGGDMDGMGGMGGMM.

Belongs to the chaperonin (HSP60) family. Forms a cylinder of 14 subunits composed of two heptameric rings stacked back-to-back. Interacts with the co-chaperonin GroES.

Its subcellular location is the cytoplasm. It carries out the reaction ATP + H2O + a folded polypeptide = ADP + phosphate + an unfolded polypeptide.. Functionally, together with its co-chaperonin GroES, plays an essential role in assisting protein folding. The GroEL-GroES system forms a nano-cage that allows encapsulation of the non-native substrate proteins and provides a physical environment optimized to promote and accelerate protein folding. The chain is Chaperonin GroEL 1 from Cutibacterium acnes (strain DSM 16379 / KPA171202) (Propionibacterium acnes).